A 196-amino-acid polypeptide reads, in one-letter code: Probable calcium-binding protein CML32 (196 aa).

EF-hand domains lie at Leu-30–Val-65, Asp-121–Pro-156, and Gly-159–Trp-194. Ca(2+)-binding residues include Asp-43, Asn-45, Asp-47, Glu-49, Glu-54, Asp-134, Asp-136, Asp-138, Glu-145, Asp-172, Asn-174, Asp-176, Arg-178, and Glu-183.

Potential calcium sensor. The polypeptide is Probable calcium-binding protein CML32 (CML32) (Oryza sativa subsp. japonica (Rice)).